The primary structure comprises 254 residues: Putative cysteine-rich repeat secretory protein 37 (254 aa).

The first 29 residues, 1–29 (MYSSYSLSKRLVSIPILAIQLLLIRSVSS), serve as a signal peptide directing secretion. Gnk2-homologous domains are found at residues 36–138 (YLNH…SIRS) and 145–251 (YRNV…LYPF).

Belongs to the cysteine-rich repeat secretory protein family.

It localises to the secreted. In Arabidopsis thaliana (Mouse-ear cress), this protein is Putative cysteine-rich repeat secretory protein 37 (CRRSP37).